A 105-amino-acid polypeptide reads, in one-letter code: UPF0060 membrane protein Rmet_4032 (105 aa).

The next 4 membrane-spanning stretches (helical) occupy residues valine 4–tryptophan 24, glycine 28–leucine 48, alanine 60–valine 80, and proline 82–phenylalanine 102.

The protein belongs to the UPF0060 family.

Its subcellular location is the cell inner membrane. This chain is UPF0060 membrane protein Rmet_4032, found in Cupriavidus metallidurans (strain ATCC 43123 / DSM 2839 / NBRC 102507 / CH34) (Ralstonia metallidurans).